The sequence spans 403 residues: Soluble calcium-activated nucleotidase 1 (403 aa).

The Cytoplasmic segment spans residues 1–44 (MPIQPFDQREWNEPMHSLRISVGGLPVLASMTKATDPRFRPRWR). The helical; Signal-anchor for type II membrane protein transmembrane segment at 45–61 (VILTSFVGAALLWLLYS) threads the bilayer. Topologically, residues 62–403 (HHQGPVPGRP…TVKYEGIEFI (342 aa)) are lumenal. Asn90 is a glycosylation site (N-linked (GlcNAc...) asparagine). 6 residues coordinate Ca(2+): Ser170, Asp171, Glu217, Glu286, Ser347, and Glu398.

Belongs to the apyrase family. Monomer. Homodimer; dimerization is Ca(2+)-dependent. It depends on Ca(2+) as a cofactor.

The protein localises to the endoplasmic reticulum membrane. The protein resides in the golgi apparatus. It is found in the golgi stack membrane. The catalysed reaction is a ribonucleoside 5'-diphosphate + H2O = a ribonucleoside 5'-phosphate + phosphate + H(+). In terms of biological role, calcium-dependent nucleotidase with a preference for UDP. The order of activity with different substrates is UDP &gt; GDP &gt; IDP &gt;&gt; UTP &gt; CDP = GTP = ITP. Has very low activity towards ADP and even lower activity towards ATP. Does not hydrolyze AMP and GMP. Involved in proteoglycan synthesis. In Mus musculus (Mouse), this protein is Soluble calcium-activated nucleotidase 1 (Cant1).